Here is a 156-residue protein sequence, read N- to C-terminus: Small ribosomal subunit protein uS7 (156 aa).

The protein belongs to the universal ribosomal protein uS7 family. As to quaternary structure, part of the 30S ribosomal subunit. Contacts proteins S9 and S11.

Its function is as follows. One of the primary rRNA binding proteins, it binds directly to 16S rRNA where it nucleates assembly of the head domain of the 30S subunit. Is located at the subunit interface close to the decoding center, probably blocks exit of the E-site tRNA. This chain is Small ribosomal subunit protein uS7, found in Alcanivorax borkumensis (strain ATCC 700651 / DSM 11573 / NCIMB 13689 / SK2).